An 814-amino-acid polypeptide reads, in one-letter code: Tax1-binding protein 1 homolog (814 aa).

Residues Ser124, Ser138, and Ser225 each carry the phosphoserine modification. The stretch at 144–623 (TTKAGLLELK…KELTKSLEDQ (480 aa)) forms a coiled coil. The tract at residues 320–420 (EEISKLQSCL…ELQLHAVKKD (101 aa)) is oligomerization. Position 619 is a phosphoserine; by IKKA (Ser619). Residue Ser632 is modified to Phosphoserine. A Phosphoserine; by IKKA modification is found at Ser693. The interval 701 to 733 (SQPARNLSRPDGLEDPEDSREDENVPIPPDPAN) is disordered. UBZ1-type zinc fingers lie at residues 752–778 (HKKC…VESH) and 779–805 (WKVC…VQTH). Cys755, Cys758, His774, His778, Cys782, Cys785, His801, and His805 together coordinate Zn(2+).

In terms of assembly, homooligomer. Interacts with TNFAIP3. Interacts with STARD13. Interacts with MYO6. Interacts with TOM1; the interaction is indirect and is mediated by MYO6, which acts as a bridge between TOM1 and TAX1BP1. Interacts with MAVS; this interaction induces MAVS polyubiquitination. Interacts with TNIP1. Interacts with TRAF6; this interaction mediates deubiquitination of TRAF6 and inhibition of NF-kappa-B activation. Interacts with RIPK1; this interaction negatively regulates RIPK1 ubiquitination. Interacts with NBR1. Interacts with TBK1. Interacts with RB1CC1. Interacts with SQSTM1. Interacts with AZI2. Interacts with TICAM1 and TRIM32; these interactions target TICAM1 to TAX1BP1-mediated selective autophagic degradation. In terms of processing, phosphorylated in the C-terminal region by CHUK/IKKA leading to NF-kappa-B signaling down-regulation.

Its subcellular location is the cytoplasm. The protein resides in the mitochondrion. It localises to the preautophagosomal structure. It is found in the cytoplasmic vesicle. The protein localises to the autophagosome. Functionally, ubiquitin-binding adapter that participates in inflammatory, antiviral and innate immune processes as well as selective autophagy regulation. Plays a key role in the negative regulation of NF-kappa-B and IRF3 signalings by acting as an adapter for the ubiquitin-editing enzyme A20/TNFAIP3 to bind and inactivate its substrates. Disrupts the interactions between the E3 ubiquitin ligase TRAF3 and TBK1/IKBKE to attenuate 'Lys63'-linked polyubiquitination of TBK1 and thereby IFN-beta production. Also recruits A20/TNFAIP3 to ubiquitinated signaling proteins TRAF6 and RIPK1, leading to their deubiquitination and disruption of IL-1 and TNF-induced NF-kappa-B signaling pathways. Inhibits virus-induced apoptosis by inducing the 'Lys-48'-linked polyubiquitination and degradation of MAVS via recruitment of the E3 ligase ITCH, thereby attenuating MAVS-mediated apoptosis signaling. As a macroautophagy/autophagy receptor, facilitates the xenophagic clearance of pathogenic bacteria such as Salmonella typhimurium and Mycobacterium tuberculosis. Upon NBR1 recruitment to the SQSTM1-ubiquitin condensates, acts as the major recruiter of RB1CC1 to these ubiquitin condensates to promote their autophagic degradation. Mediates the autophagic degradation of other substrates including TICAM1. This is Tax1-binding protein 1 homolog (Tax1bp1) from Mus musculus (Mouse).